Consider the following 224-residue polypeptide: Cytidylate kinase (224 aa).

Residue Gly11–Thr19 participates in ATP binding.

This sequence belongs to the cytidylate kinase family. Type 1 subfamily.

It is found in the cytoplasm. The enzyme catalyses CMP + ATP = CDP + ADP. It carries out the reaction dCMP + ATP = dCDP + ADP. This is Cytidylate kinase from Listeria monocytogenes serotype 4a (strain HCC23).